A 27-amino-acid chain; its full sequence is MENEHQYSGARCSGQAAYVAKRQECAK.

Functionally, a short protein whose stop codon overlaps with the start codon of downstream iraD; its mRNA secondary structure is predicted to fold and sequester the Shine-Dalgarno sequence of iraD. When this protein is expressed the downstream iraD is also expressed due to ribosomal coupling. The polypeptide is iraD leader peptide (idlP) (Escherichia coli (strain K12)).